A 448-amino-acid chain; its full sequence is Probable D-serine dehydratase (448 aa).

Lysine 111 is modified (N6-(pyridoxal phosphate)lysine).

It belongs to the serine/threonine dehydratase family. DsdA subfamily. Pyridoxal 5'-phosphate is required as a cofactor.

The enzyme catalyses D-serine = pyruvate + NH4(+). The chain is Probable D-serine dehydratase from Rhizobium etli (strain CIAT 652).